We begin with the raw amino-acid sequence, 87 residues long: Large ribosomal subunit protein bL27 (87 aa).

Residues 1–26 (MAHKKGTGSTRNGRDSNSKRLGVKAY) are disordered.

This sequence belongs to the bacterial ribosomal protein bL27 family.

This Prochlorococcus marinus (strain SARG / CCMP1375 / SS120) protein is Large ribosomal subunit protein bL27.